Here is a 398-residue protein sequence, read N- to C-terminus: Flavohemoprotein (398 aa).

A Globin domain is found at 9 to 147; that stretch reads QLTPAQIKII…LAKLLIDLEA (139 aa). Heme b is bound at residue histidine 93. Catalysis depends on charge relay system residues tyrosine 103 and glutamate 146. The interval 155–398 is reductase; sequence WRWFKDFKVT…KLEYFGPYDP (244 aa). Residues 156–263 enclose the FAD-binding FR-type domain; the sequence is RWFKDFKVTR…APPAGNFVYD (108 aa). FAD contacts are provided by residues tyrosine 196 and 212-215; that span reads REYS. 276-281 contributes to the NADP(+) binding site; sequence GIGITP. An FAD-binding site is contributed by 395 to 398; it reads PYDP.

The protein belongs to the globin family. FAD is required as a cofactor. The cofactor is heme b.

It localises to the cytoplasm. It carries out the reaction 2 nitric oxide + NADPH + 2 O2 = 2 nitrate + NADP(+) + H(+). It catalyses the reaction 2 nitric oxide + NADH + 2 O2 = 2 nitrate + NAD(+) + H(+). With respect to regulation, inhibited by imidazoles. Its function is as follows. Nitric oxide dioxygenase involved in NO detoxification in an aerobic process, termed nitric oxide dioxygenase (NOD) reaction that utilizes O(2) and NAD(P)H to convert NO to nitrate, which protects the fungus from various noxious nitrogen compounds. Therefore, plays a central role in the inducible response to nitrosative stress. Plays a role in virulence since nitric oxide is generated by macrophages of the host immune system. This Candida albicans (strain SC5314 / ATCC MYA-2876) (Yeast) protein is Flavohemoprotein (YHB1).